The following is a 206-amino-acid chain: Small ribosomal subunit protein uS3 (206 aa).

The 69-residue stretch at 39–107 folds into the KH type-2 domain; sequence IRSYINESFK…SVEVNVVGIK (69 aa).

This sequence belongs to the universal ribosomal protein uS3 family. Part of the 30S ribosomal subunit. Forms a tight complex with proteins S10 and S14.

Functionally, binds the lower part of the 30S subunit head. Binds mRNA in the 70S ribosome, positioning it for translation. The chain is Small ribosomal subunit protein uS3 from Wolbachia sp. subsp. Brugia malayi (strain TRS).